The primary structure comprises 457 residues: MSGTRASNDRPPSAGGVKRGRLQHEAATTGSRVTVVLGAQWGDEGKGKVVDLLATDADVVSRCQGGNNAGHTVVVDGKEYDFHLLPSGIINPKAVSFIGNGVVVHLPGLFEEAEKNEKKGLKDWEKRLVISDRAHLVFDFHQAVDGLQEVQRQAQEGKNIGTTRKGIGPAYSSKAARTGLRICDLLSDFDEFSSRFKNLARQHQSMFPSLEVDVEGQLKRLKGFAERIRPMVRDGVYFMYEALHGPPKKILVEGANAALLDIDFGTYPFVTSSNCTVGGVCTGLGIPPQNIGEVYGVVKAYTTRVGIGAFPTEQINEIGDLLQSRGHEWGVTTGRKRRCGWLDLMILRYAHMVNGFTALALTKLDILDALDEIKVGVAYKLGGKRIPYFPANQEILQKVEVEYETLPGWKADTTGARKWEDLPPQAQSYIRFVENHVGVAVKWVGVGKSRDSMIQLF.

Residues Met1 to Glu25 form a disordered region. Residues Gly42–Lys48 and Gly70–Thr72 contribute to the GTP site. Asp43 (proton acceptor) is an active-site residue. Residues Asp43 and Gly70 each coordinate Mg(2+). Substrate is bound at residue Asp43. IMP contacts are provided by residues Asp43–Lys46, Asn68–His71, Thr163, Arg177, Asn256, Thr271, and Arg335. Residue His71 is the Proton donor of the active site. Val331–Arg337 is a binding site for substrate. GTP is bound by residues Arg337, Lys363–Asp365, and Gly445–Lys448.

This sequence belongs to the adenylosuccinate synthetase family. Homodimer. Mg(2+) is required as a cofactor.

It localises to the cytoplasm. It carries out the reaction IMP + L-aspartate + GTP = N(6)-(1,2-dicarboxyethyl)-AMP + GDP + phosphate + 2 H(+). Its pathway is purine metabolism; AMP biosynthesis via de novo pathway; AMP from IMP: step 1/2. Component of the purine nucleotide cycle (PNC), which interconverts IMP and AMP to regulate the nucleotide levels in various tissues, and which contributes to glycolysis and ammoniagenesis. Catalyzes the first committed step in the biosynthesis of AMP from IMP. The chain is Adenylosuccinate synthetase isozyme 1 from Bos taurus (Bovine).